We begin with the raw amino-acid sequence, 109 residues long: Large ribosomal subunit protein eL30 (109 aa).

Belongs to the eukaryotic ribosomal protein eL30 family.

The sequence is that of Large ribosomal subunit protein eL30 from Methanopyrus kandleri (strain AV19 / DSM 6324 / JCM 9639 / NBRC 100938).